A 211-amino-acid chain; its full sequence is Ferric nitrobindin-like protein (211 aa).

The GXWXGXG motif lies at 21–27 (GRWRGPG). Residues 104-130 (GVVQEGSDTRTEPGGAEPDPAGRRAPS) are disordered.

It belongs to the nitrobindin family.

The chain is Ferric nitrobindin-like protein from Beutenbergia cavernae (strain ATCC BAA-8 / DSM 12333 / CCUG 43141 / JCM 11478 / NBRC 16432 / NCIMB 13614 / HKI 0122).